Here is a 302-residue protein sequence, read N- to C-terminus: Protein KTI12 homolog (302 aa).

8–15 (GQPCSGKS) contacts ATP. Residues 260 to 273 (LRRTFVKLMGQSSL) form a calmodulin-binding region.

This sequence belongs to the KTI12 family. In terms of assembly, interacts with the elongator complex. Binds to calmodulin in a calcium-dependent manner. Expressed in roots, hypocotyls, cotyledons, shoot apices, stems, inflorescence apices, leaves and flowers.

It is found in the cytoplasm. Its subcellular location is the nucleus. In terms of biological role, elongator complex-associated factor that is not a structural subunit but rather transiently contacts the complex. Regulates both meristem activity and organ growth; acts as a positive regulator of adaxial leaf patterning by modulating both cell division and differentiation. Required for an early step in synthesis of 5-carbamoylmethyl (ncm5) groups present on uridines (ncm5U) at the wobble position in tRNA. The sequence is that of Protein KTI12 homolog from Arabidopsis thaliana (Mouse-ear cress).